Reading from the N-terminus, the 294-residue chain is MRVQRVQIMGAGALGSLVGALIQLAGYDVIFVARGKQLEALKKGLRVSGLKNAELKVYCTSQPEDADITFVTVKAYDTETVAKKLAEVDAGVVCSLQNGVGNEEILAKYCRKVLGGVTTYGANLKDYGHVVYAGEGYTYVGEMDGRVSGEAEMVAEVLRDAGMRAEAVNDIEFRIWAKAVVNAAINPITAICRVKNGEVVRNPHLWEVARAVADEGRQVMARMGYEFDAASEVRKVAEMTAENRSSMLQDLERGKRTEVEFINGAIVKKGEEFGIDCAVNRTLLNLVRGVESGL.

Residues 10–15 (GAGALG), Arg34, Lys74, Asn98, and Ala122 each bind NADP(+). Lys178 serves as the catalytic Proton donor. Substrate is bound by residues Lys178, Asn182, Asn186, Asn196, and 243-246 (NRSS). Residue Glu258 participates in NADP(+) binding.

This sequence belongs to the ketopantoate reductase family.

The protein localises to the cytoplasm. The enzyme catalyses (R)-pantoate + NAD(+) = 2-dehydropantoate + NADH + H(+). The catalysed reaction is (R)-pantoate + NADP(+) = 2-dehydropantoate + NADPH + H(+). It functions in the pathway cofactor biosynthesis; coenzyme A biosynthesis. In terms of biological role, catalyzes the NAD(P)H-dependent reduction of ketopantoate into pantoic acid. In Archaeoglobus fulgidus (strain ATCC 49558 / DSM 4304 / JCM 9628 / NBRC 100126 / VC-16), this protein is 2-dehydropantoate 2-reductase.